The following is a 274-amino-acid chain: 4-hydroxy-3-methylbut-2-enyl diphosphate reductase (274 aa).

Residue cysteine 12 coordinates [4Fe-4S] cluster. Residues histidine 36 and histidine 70 each coordinate (2E)-4-hydroxy-3-methylbut-2-enyl diphosphate. Residues histidine 36 and histidine 70 each coordinate dimethylallyl diphosphate. Histidine 36 and histidine 70 together coordinate isopentenyl diphosphate. Cysteine 92 contributes to the [4Fe-4S] cluster binding site. Histidine 120 contributes to the (2E)-4-hydroxy-3-methylbut-2-enyl diphosphate binding site. Histidine 120 is a binding site for dimethylallyl diphosphate. Histidine 120 contributes to the isopentenyl diphosphate binding site. Glutamate 122 functions as the Proton donor in the catalytic mechanism. Threonine 158 is a (2E)-4-hydroxy-3-methylbut-2-enyl diphosphate binding site. A [4Fe-4S] cluster-binding site is contributed by cysteine 186. (2E)-4-hydroxy-3-methylbut-2-enyl diphosphate-binding residues include serine 214, serine 215, asparagine 216, and serine 258. 4 residues coordinate dimethylallyl diphosphate: serine 214, serine 215, asparagine 216, and serine 258. Isopentenyl diphosphate is bound by residues serine 214, serine 215, asparagine 216, and serine 258.

It belongs to the IspH family. [4Fe-4S] cluster is required as a cofactor.

It carries out the reaction isopentenyl diphosphate + 2 oxidized [2Fe-2S]-[ferredoxin] + H2O = (2E)-4-hydroxy-3-methylbut-2-enyl diphosphate + 2 reduced [2Fe-2S]-[ferredoxin] + 2 H(+). The enzyme catalyses dimethylallyl diphosphate + 2 oxidized [2Fe-2S]-[ferredoxin] + H2O = (2E)-4-hydroxy-3-methylbut-2-enyl diphosphate + 2 reduced [2Fe-2S]-[ferredoxin] + 2 H(+). It functions in the pathway isoprenoid biosynthesis; dimethylallyl diphosphate biosynthesis; dimethylallyl diphosphate from (2E)-4-hydroxy-3-methylbutenyl diphosphate: step 1/1. The protein operates within isoprenoid biosynthesis; isopentenyl diphosphate biosynthesis via DXP pathway; isopentenyl diphosphate from 1-deoxy-D-xylulose 5-phosphate: step 6/6. Functionally, catalyzes the conversion of 1-hydroxy-2-methyl-2-(E)-butenyl 4-diphosphate (HMBPP) into a mixture of isopentenyl diphosphate (IPP) and dimethylallyl diphosphate (DMAPP). Acts in the terminal step of the DOXP/MEP pathway for isoprenoid precursor biosynthesis. The sequence is that of 4-hydroxy-3-methylbut-2-enyl diphosphate reductase from Campylobacter curvus (strain 525.92).